Consider the following 330-residue polypeptide: Protein RecA (330 aa).

ATP is bound at residue 66-73 (GPESSGKT).

This sequence belongs to the RecA family.

The protein localises to the cytoplasm. Functionally, can catalyze the hydrolysis of ATP in the presence of single-stranded DNA, the ATP-dependent uptake of single-stranded DNA by duplex DNA, and the ATP-dependent hybridization of homologous single-stranded DNAs. It interacts with LexA causing its activation and leading to its autocatalytic cleavage. The polypeptide is Protein RecA (Bacteroides thetaiotaomicron (strain ATCC 29148 / DSM 2079 / JCM 5827 / CCUG 10774 / NCTC 10582 / VPI-5482 / E50)).